Reading from the N-terminus, the 369-residue chain is DNA replication and repair protein RecF (369 aa).

30-37 (GDNGSGKT) contributes to the ATP binding site.

This sequence belongs to the RecF family.

The protein resides in the cytoplasm. The RecF protein is involved in DNA metabolism; it is required for DNA replication and normal SOS inducibility. RecF binds preferentially to single-stranded, linear DNA. It also seems to bind ATP. This Pseudomonas paraeruginosa (strain DSM 24068 / PA7) (Pseudomonas aeruginosa (strain PA7)) protein is DNA replication and repair protein RecF.